An 883-amino-acid polypeptide reads, in one-letter code: Translation initiation factor IF-2 (883 aa).

Positions 118 to 261 (VARESEAAPA…KKKEAFKKTE (144 aa)) are disordered. Low complexity predominate over residues 124 to 150 (AAPAEEPVAAAVKPASEPPVVQKAPVA). Composition is skewed to basic and acidic residues over residues 183 to 200 (PADR…EERI) and 252 to 261 (KKKEAFKKTE). The 170-residue stretch at 383 to 552 (KRPPVVTIMG…LLQADVMDLK (170 aa)) folds into the tr-type G domain. Residues 392-399 (GHVDHGKT) form a G1 region. 392–399 (GHVDHGKT) is a GTP binding site. The tract at residues 417–421 (GITQH) is G2. The G3 stretch occupies residues 438-441 (DTPG). Residues 438–442 (DTPGH) and 492–495 (NKID) contribute to the GTP site. The G4 stretch occupies residues 492–495 (NKID). Positions 528-530 (SAK) are G5.

It belongs to the TRAFAC class translation factor GTPase superfamily. Classic translation factor GTPase family. IF-2 subfamily.

Its subcellular location is the cytoplasm. One of the essential components for the initiation of protein synthesis. Protects formylmethionyl-tRNA from spontaneous hydrolysis and promotes its binding to the 30S ribosomal subunits. Also involved in the hydrolysis of GTP during the formation of the 70S ribosomal complex. In Geobacter sulfurreducens (strain ATCC 51573 / DSM 12127 / PCA), this protein is Translation initiation factor IF-2.